A 630-amino-acid chain; its full sequence is Biosynthetic arginine decarboxylase (630 aa).

Residue Lys99 is modified to N6-(pyridoxal phosphate)lysine. A substrate-binding site is contributed by 281–291 (VDIGGGLGVDY).

It belongs to the Orn/Lys/Arg decarboxylase class-II family. SpeA subfamily. Requires Mg(2+) as cofactor. Pyridoxal 5'-phosphate is required as a cofactor.

The enzyme catalyses L-arginine + H(+) = agmatine + CO2. Catalyzes the biosynthesis of agmatine from arginine. This chain is Biosynthetic arginine decarboxylase, found in Bacteroides thetaiotaomicron (strain ATCC 29148 / DSM 2079 / JCM 5827 / CCUG 10774 / NCTC 10582 / VPI-5482 / E50).